We begin with the raw amino-acid sequence, 124 residues long: Large ribosomal subunit protein bL12 (124 aa).

Belongs to the bacterial ribosomal protein bL12 family. Homodimer. Part of the ribosomal stalk of the 50S ribosomal subunit. Forms a multimeric L10(L12)X complex, where L10 forms an elongated spine to which 2 to 4 L12 dimers bind in a sequential fashion. Binds GTP-bound translation factors.

Functionally, forms part of the ribosomal stalk which helps the ribosome interact with GTP-bound translation factors. Is thus essential for accurate translation. This Pelodictyon phaeoclathratiforme (strain DSM 5477 / BU-1) protein is Large ribosomal subunit protein bL12.